The following is a 370-amino-acid chain: Homoserine kinase (370 aa).

The N-terminal 34 residues, 1-34, are a transit peptide targeting the chloroplast; the sequence is MASLCFQSPSKPISYFQPKSNPSPPLFAKVSVFR. Residue 143–154 participates in ATP binding; that stretch reads LPLGSGLGSSAA.

Belongs to the GHMP kinase family. Homoserine kinase subfamily.

The protein resides in the plastid. It is found in the chloroplast stroma. It carries out the reaction L-homoserine + ATP = O-phospho-L-homoserine + ADP + H(+). The protein operates within amino-acid biosynthesis; L-threonine biosynthesis; L-threonine from L-aspartate: step 4/5. In terms of biological role, catalyzes the ATP-dependent phosphorylation of L-homoserine to L-homoserine phosphate. Is specific for L-homoserine and cannot use other substrates such D-serine, L-serine, D-threonine and L-threonine, galactose or D-homoserine in vitro. Required for susceptibility to the downy mildew pathogen Hyaloperonospora parasitica. This chain is Homoserine kinase (HSK), found in Arabidopsis thaliana (Mouse-ear cress).